The sequence spans 376 residues: RNA binding protein fox-1 homolog 1 (376 aa).

A disordered region spans residues 1 to 126 (MEEKGSRMVQ…QPKRLHVSNI (126 aa)). A compositionally biased stretch (polar residues) spans 72 to 89 (QTHSEQSPADTNAQTVSG). Low complexity predominate over residues 90–101 (TATQTDDAAPTD). Residues 102–115 (GQPQTQPSENTENK) are compositionally biased toward polar residues. Residues 119-195 (KRLHVSNIPF…RKIEVNNATA (77 aa)) enclose the RRM domain. R319 bears the Asymmetric dimethylarginine mark.

As to quaternary structure, binds to the C-terminus of ATXN2.

The protein localises to the nucleus. The protein resides in the cytoplasm. RNA-binding protein that regulates alternative splicing events by binding to 5'-UGCAUGU-3' elements. Prevents binding of U2AF2 to the 3'-splice site. Regulates alternative splicing of tissue-specific exons and of differentially spliced exons during erythropoiesis. The protein is RNA binding protein fox-1 homolog 1 (RBFOX1) of Macaca fascicularis (Crab-eating macaque).